A 215-amino-acid polypeptide reads, in one-letter code: MHFRALLVSALATLAMAAPAPTLEARQSLSSNELENGPCRDVTFIFARGSTEQGNMGFIVGPPTCTALKLKLGSDKVACQGVGGAYTANLLPNFLSQNTDPKSIAAATDMFQLARTKCPNTKIVTGGYSQGSAVIDNSVKALDDDLKSRVKAAVLFGFTRNVVDRGQIPNYPKDQVKVYCAVGDMVCYNTLIITAAHLTYGIYANDAANFLVSKL.

An N-terminal signal peptide occupies residues 1 to 17 (MHFRALLVSALATLAMA). 2 disulfides stabilise this stretch: Cys39–Cys118 and Cys65–Cys79. The active-site Nucleophile is Ser129. Residues Cys180 and Cys187 are joined by a disulfide bond. Asp184 is a catalytic residue. Catalysis depends on His197, which acts as the Proton donor/acceptor.

This sequence belongs to the cutinase family.

The protein localises to the secreted. It carries out the reaction cutin + H2O = cutin monomers.. Catalyzes the hydrolysis of complex carboxylic polyesters found in the cell wall of plants. Degrades cutin, a macromolecule that forms the structure of the plant cuticle. The sequence is that of Probable cutinase 3 from Aspergillus clavatus (strain ATCC 1007 / CBS 513.65 / DSM 816 / NCTC 3887 / NRRL 1 / QM 1276 / 107).